Reading from the N-terminus, the 104-residue chain is Protein MGF 110-2L (104 aa).

The N-terminal stretch at 1 to 31 is a signal peptide; sequence MRFFSYLGLLLAGLVSLQGFSTDNPLEEELR.

It belongs to the asfivirus MGF 110 family.

Functionally, plays a role in virus cell tropism, and may be required for efficient virus replication in macrophages. In African swine fever virus (isolate Warthog/Namibia/Wart80/1980) (ASFV), this protein is Protein MGF 110-2L.